The sequence spans 196 residues: uncharacterized protein (196 aa).

The protein belongs to the flavoredoxin family. It depends on FMN as a cofactor.

This is an uncharacterized protein from Aquifex aeolicus (strain VF5).